A 74-amino-acid polypeptide reads, in one-letter code: Conotoxin VnMEKL-0221 (74 aa).

A signal peptide spans 1–19 (MEKLTILLLVAAVLMWTQA). Residues 20-46 (LIQEKRPKEKIKFLSKRKTTAESWWEG) constitute a propeptide that is removed on maturation. Intrachain disulfides connect cysteine 48/cysteine 62, cysteine 55/cysteine 66, and cysteine 61/cysteine 71.

Belongs to the conotoxin O2 superfamily. As to expression, expressed by the venom duct.

It is found in the secreted. In Conus ventricosus (Mediterranean cone), this protein is Conotoxin VnMEKL-0221.